The primary structure comprises 204 residues: Regulatory protein RecX (204 aa).

The segment covering 1 to 22 (MTKSSRPQSISDSVSVAGSQGT) has biased composition (polar residues). The interval 1–44 (MTKSSRPQSISDSVSVAGSQGTLDDLRARVASVPEAPTREPVDS) is disordered.

This sequence belongs to the RecX family.

The protein localises to the cytoplasm. Functionally, modulates RecA activity. The polypeptide is Regulatory protein RecX (Mycobacteroides abscessus (strain ATCC 19977 / DSM 44196 / CCUG 20993 / CIP 104536 / JCM 13569 / NCTC 13031 / TMC 1543 / L948) (Mycobacterium abscessus)).